The following is a 332-amino-acid chain: MVMVRDIFHEPVLVNEVVAFLVRKPGIYVDGTLGGGGHSSAMLRALFDAGFLAGSLLIGIDQDDAALRVAGETLKEFAASTVLVKGNFCDMGGLIASICAEKGLEPKVMGILLDLGVSSFQINTPDRGFSYLREGPLDMRMDSNASRSAADIVNGYDEQELARLFYRYGEEPRSRSIARAIVAYRQKHGAVTYTQELAAIIRGNAHGGEKVIKTLSRVFQALRIEVNAELDVLRQALYDGIDCLDETGRMAIISYHSLEDRIVKRVFAEKARSDWGPKGVGLREPLSWGSVAPVTRKPLIAAPDEIALNSRARSAKLRVIEKIHEGGRRASE.

S-adenosyl-L-methionine contacts are provided by residues 36–38 (GGH), D61, F88, D114, and Q121.

The protein belongs to the methyltransferase superfamily. RsmH family.

The protein resides in the cytoplasm. The catalysed reaction is cytidine(1402) in 16S rRNA + S-adenosyl-L-methionine = N(4)-methylcytidine(1402) in 16S rRNA + S-adenosyl-L-homocysteine + H(+). In terms of biological role, specifically methylates the N4 position of cytidine in position 1402 (C1402) of 16S rRNA. The protein is Ribosomal RNA small subunit methyltransferase H of Pelodictyon phaeoclathratiforme (strain DSM 5477 / BU-1).